The following is a 721-amino-acid chain: Glycine--tRNA ligase beta subunit (721 aa).

Belongs to the class-II aminoacyl-tRNA synthetase family. In terms of assembly, tetramer of two alpha and two beta subunits.

Its subcellular location is the cytoplasm. It carries out the reaction tRNA(Gly) + glycine + ATP = glycyl-tRNA(Gly) + AMP + diphosphate. The protein is Glycine--tRNA ligase beta subunit of Sinorhizobium fredii (strain NBRC 101917 / NGR234).